A 343-amino-acid chain; its full sequence is Anthranilate phosphoribosyltransferase (343 aa).

5-phospho-alpha-D-ribose 1-diphosphate-binding positions include Gly86, 89 to 90 (GD), Thr94, 96 to 99 (NIST), 114 to 122 (KHGNRSASG), and Ser126. An anthranilate-binding site is contributed by Gly86. Ser98 contributes to the Mg(2+) binding site. Asn117 serves as a coordination point for anthranilate. Arg172 is an anthranilate binding site. Residues Asp231 and Glu232 each coordinate Mg(2+).

This sequence belongs to the anthranilate phosphoribosyltransferase family. As to quaternary structure, homodimer. It depends on Mg(2+) as a cofactor.

The enzyme catalyses N-(5-phospho-beta-D-ribosyl)anthranilate + diphosphate = 5-phospho-alpha-D-ribose 1-diphosphate + anthranilate. Its pathway is amino-acid biosynthesis; L-tryptophan biosynthesis; L-tryptophan from chorismate: step 2/5. Its function is as follows. Catalyzes the transfer of the phosphoribosyl group of 5-phosphorylribose-1-pyrophosphate (PRPP) to anthranilate to yield N-(5'-phosphoribosyl)-anthranilate (PRA). This chain is Anthranilate phosphoribosyltransferase, found in Synechococcus sp. (strain JA-2-3B'a(2-13)) (Cyanobacteria bacterium Yellowstone B-Prime).